Here is a 220-residue protein sequence, read N- to C-terminus: Probable septum site-determining protein MinC (220 aa).

The protein belongs to the MinC family. Interacts with MinD and FtsZ.

Cell division inhibitor that blocks the formation of polar Z ring septums. Rapidly oscillates between the poles of the cell to destabilize FtsZ filaments that have formed before they mature into polar Z rings. Prevents FtsZ polymerization. This Vibrio vulnificus (strain CMCP6) protein is Probable septum site-determining protein MinC.